The primary structure comprises 452 residues: Peptidoglycan DL-endopeptidase CwlO (452 aa).

An N-terminal signal peptide occupies residues 1–30 (MKKKVYTFGLASILGTASLFTPFMNNTASA). Over residues 28-38 (ASAETSQQKQE) the composition is skewed to polar residues. Disordered stretches follow at residues 28–53 (ASAE…IESK) and 258–317 (AAAA…GSVV). Basic and acidic residues-rich tracts occupy residues 39–53 (IQQK…IESK) and 263–275 (KAKE…EKSD). Low complexity predominate over residues 276 to 317 (SGSSSSSNSGSVSKSDGSSNSGSSSSKKSSSPSRNYSSGSVV). In terms of domain architecture, NlpC/P60 spans 321-450 (GNAIEAAIST…KAFNGVVRRV (130 aa)). The active-site Nucleophile is Cys-358. Catalysis depends on His-410, which acts as the Proton acceptor. The active site involves Asn-422.

It belongs to the peptidase C40 family.

The protein localises to the secreted. Functionally, shows a cell wall hydrolytic DL-endopeptidase activity. The chain is Peptidoglycan DL-endopeptidase CwlO (cwlO) from Bacillus licheniformis (strain ATCC 14580 / DSM 13 / JCM 2505 / CCUG 7422 / NBRC 12200 / NCIMB 9375 / NCTC 10341 / NRRL NRS-1264 / Gibson 46).